A 466-amino-acid chain; its full sequence is 3-isopropylmalate dehydratase large subunit (466 aa).

[4Fe-4S] cluster is bound by residues Cys347, Cys407, and Cys410.

The protein belongs to the aconitase/IPM isomerase family. LeuC type 1 subfamily. In terms of assembly, heterodimer of LeuC and LeuD. [4Fe-4S] cluster is required as a cofactor.

It carries out the reaction (2R,3S)-3-isopropylmalate = (2S)-2-isopropylmalate. It participates in amino-acid biosynthesis; L-leucine biosynthesis; L-leucine from 3-methyl-2-oxobutanoate: step 2/4. Its function is as follows. Catalyzes the isomerization between 2-isopropylmalate and 3-isopropylmalate, via the formation of 2-isopropylmaleate. The protein is 3-isopropylmalate dehydratase large subunit of Vibrio vulnificus (strain YJ016).